Here is a 357-residue protein sequence, read N- to C-terminus: UDP-N-acetylglucosamine--N-acetylmuramyl-(pentapeptide) pyrophosphoryl-undecaprenol N-acetylglucosamine transferase (357 aa).

Residues 13-15, Asn125, Arg161, Ser189, Ile243, and Gln288 each bind UDP-N-acetyl-alpha-D-glucosamine; that span reads TGG.

It belongs to the glycosyltransferase 28 family. MurG subfamily.

It localises to the cell inner membrane. It catalyses the reaction di-trans,octa-cis-undecaprenyl diphospho-N-acetyl-alpha-D-muramoyl-L-alanyl-D-glutamyl-meso-2,6-diaminopimeloyl-D-alanyl-D-alanine + UDP-N-acetyl-alpha-D-glucosamine = di-trans,octa-cis-undecaprenyl diphospho-[N-acetyl-alpha-D-glucosaminyl-(1-&gt;4)]-N-acetyl-alpha-D-muramoyl-L-alanyl-D-glutamyl-meso-2,6-diaminopimeloyl-D-alanyl-D-alanine + UDP + H(+). It participates in cell wall biogenesis; peptidoglycan biosynthesis. In terms of biological role, cell wall formation. Catalyzes the transfer of a GlcNAc subunit on undecaprenyl-pyrophosphoryl-MurNAc-pentapeptide (lipid intermediate I) to form undecaprenyl-pyrophosphoryl-MurNAc-(pentapeptide)GlcNAc (lipid intermediate II). In Bordetella petrii (strain ATCC BAA-461 / DSM 12804 / CCUG 43448), this protein is UDP-N-acetylglucosamine--N-acetylmuramyl-(pentapeptide) pyrophosphoryl-undecaprenol N-acetylglucosamine transferase.